The following is a 249-amino-acid chain: Glutathione S-transferase S1 (249 aa).

A compositionally biased stretch (low complexity) spans 1–38 (MADEAQAPPAEGAPPAEGEAPPPAEGAEGAVEGGEAAP). The tract at residues 1-42 (MADEAQAPPAEGAPPAEGEAPPPAEGAEGAVEGGEAAPPAEP) is disordered. Residues 48-125 (HSYTLFYFNV…FLAKTVGLCG (78 aa)) enclose the GST N-terminal domain. Residues tyrosine 54, tryptophan 85, lysine 89, 96–97 (QM), and 109–110 (QS) contribute to the glutathione site. The 123-residue stretch at 127–249 (TPWEDLQIDI…WIEKRPVTEV (123 aa)) folds into the GST C-terminal domain.

It belongs to the GST superfamily. Sigma family. Homodimer.

It carries out the reaction RX + glutathione = an S-substituted glutathione + a halide anion + H(+). Its function is as follows. Conjugation of reduced glutathione to a wide number of exogenous and endogenous hydrophobic electrophiles. May be involved in the detoxification of metabolites produced during cellular division and morphogenesis. The sequence is that of Glutathione S-transferase S1 from Drosophila melanogaster (Fruit fly).